The primary structure comprises 387 residues: 3-ketoacyl-CoA thiolase (387 aa).

The Acyl-thioester intermediate role is filled by cysteine 91. Catalysis depends on proton acceptor residues histidine 343 and cysteine 373.

It belongs to the thiolase-like superfamily. Thiolase family. Heterotetramer of two alpha chains (FadB) and two beta chains (FadA).

The protein localises to the cytoplasm. The catalysed reaction is an acyl-CoA + acetyl-CoA = a 3-oxoacyl-CoA + CoA. It participates in lipid metabolism; fatty acid beta-oxidation. Catalyzes the final step of fatty acid oxidation in which acetyl-CoA is released and the CoA ester of a fatty acid two carbons shorter is formed. In Shewanella baltica (strain OS155 / ATCC BAA-1091), this protein is 3-ketoacyl-CoA thiolase.